We begin with the raw amino-acid sequence, 257 residues long: GTP cyclohydrolase FolE2 (257 aa).

This sequence belongs to the GTP cyclohydrolase IV family.

It catalyses the reaction GTP + H2O = 7,8-dihydroneopterin 3'-triphosphate + formate + H(+). It participates in cofactor biosynthesis; 7,8-dihydroneopterin triphosphate biosynthesis; 7,8-dihydroneopterin triphosphate from GTP: step 1/1. Functionally, converts GTP to 7,8-dihydroneopterin triphosphate. This chain is GTP cyclohydrolase FolE2, found in Dictyoglomus turgidum (strain DSM 6724 / Z-1310).